A 105-amino-acid polypeptide reads, in one-letter code: uncharacterized protein (105 aa).

The disordered stretch occupies residues 1-27 (MSLKSWHPQSKTKRVGASEGNPQWGSG).

This is an uncharacterized protein from Homo sapiens (Human).